The sequence spans 105 residues: Antitoxin HigA-1 (105 aa).

Positions 15-69 (LKVEFLEPMGITSKALAEAMGVHRNTVSNLINGGVLTAPVAIKLAAALGNTPEFW) constitute an HTH cro/C1-type domain. The H-T-H motif DNA-binding region spans 27–46 (SKALAEAMGVHRNTVSNLIN).

Its function is as follows. Antitoxin component of a type II toxin-antitoxin (TA) system that counteracts the effect of the HigB-1 toxin. Binds to its own promoter and regulates transcription of the higB-1/higA-1 operon. This Vibrio cholerae serotype O1 (strain ATCC 39315 / El Tor Inaba N16961) protein is Antitoxin HigA-1 (higA-1).